A 239-amino-acid chain; its full sequence is Probable fimbrial chaperone YehC (239 aa).

The signal sequence occupies residues 1–31 (MAAIPWRPFNLRGIKMKGLLSLLIFSMVLPA).

It belongs to the periplasmic pilus chaperone family.

The protein localises to the periplasm. Part of the yehABCD fimbrial operon. Could contribute to adhesion to various surfaces in specific environmental niches. In Escherichia coli (strain K12), this protein is Probable fimbrial chaperone YehC (yehC).